The primary structure comprises 101 residues: Integration host factor subunit beta (101 aa).

The disordered stretch occupies residues 57–77; the sequence is PARAGRNPRTGAHVPVDQKSV.

Belongs to the bacterial histone-like protein family. Heterodimer of an alpha and a beta chain.

In terms of biological role, this protein is one of the two subunits of integration host factor, a specific DNA-binding protein that functions in genetic recombination as well as in transcriptional and translational control. This chain is Integration host factor subunit beta, found in Rhodopseudomonas palustris (strain HaA2).